The primary structure comprises 387 residues: [LysW]-aminoadipate semialdehyde/glutamate semialdehyde transaminase (387 aa).

Pyridoxal 5'-phosphate contacts are provided by residues glycine 96 to threonine 97 and phenylalanine 123. Arginine 126 contacts substrate. Aspartate 207–glutamine 210 is a binding site for pyridoxal 5'-phosphate. Lysine 236 is subject to N6-(pyridoxal phosphate)lysine. Serine 264 contributes to the substrate binding site. Threonine 265 lines the pyridoxal 5'-phosphate pocket.

The protein belongs to the class-III pyridoxal-phosphate-dependent aminotransferase family. LysJ subfamily. As to quaternary structure, homodimer. Pyridoxal 5'-phosphate is required as a cofactor.

The protein localises to the cytoplasm. It carries out the reaction [amino-group carrier protein]-C-terminal-gamma-(L-lysyl)-L-glutamate + 2-oxoglutarate = [amino-group carrier protein]-C-terminal-N-(1-carboxy-5-oxopentan-1-yl)-L-glutamine + L-glutamate. The enzyme catalyses [amino-group carrier protein]-C-terminal-gamma-(L-ornithyl)-L-glutamate + 2-oxoglutarate = [amino-group carrier protein]-C-terminal-gamma-(L-glutamyl-5-semialdehyde)-L-glutamate + L-glutamate. It participates in amino-acid biosynthesis; L-lysine biosynthesis via AAA pathway; L-lysine from L-alpha-aminoadipate (Thermus route): step 4/5. It functions in the pathway amino-acid biosynthesis; L-arginine biosynthesis. Involved in both the arginine and lysine biosynthetic pathways. This chain is [LysW]-aminoadipate semialdehyde/glutamate semialdehyde transaminase, found in Sulfurisphaera tokodaii (strain DSM 16993 / JCM 10545 / NBRC 100140 / 7) (Sulfolobus tokodaii).